The chain runs to 1012 residues: MPLATTLGTLVLLLLLPLPRGAEVTGDHSNVALDYGALEGEEGTEQQLHYHDPCKAAVFWGDIALDEDDLKLFHIDKAEDWTKPSIDKPGHDTGGLEETSARWPNDTASNASIQAPRKDGKDATTFLPNPGTSNTTAKTFSARVRRATTSRTERIWPGGVIPYVIGGNFTGTQRAIFKQAMRHWEKHTCVTFVERTDEESFIVFSYRTCGCCSYVGRRGGGPQAISIGKNCDKFGIVAHELGHVVGFWHEHTRPDRDQHVTIIRENIQPGQEYNFLKMEAGEVSSLGETYDFDSIMHYARNTFSRGVFLDTILPRRDDNGVRPTIGQRVRLSQGDIAQARKLYKCPACGETLQDTTGNFSAPGFPNGYPSYSHCVWRISVTPGEKIILNFTSMDLFKSRLCWYDYVEIRDGYWRKAPLLGRFCGDKIPESLVSSDSRLWVEFRSSSSSLGKGFFAVYEAMCGGDITKDAGQIQSPNYPDDYRPSKECVWRITVPDGFHVGLTFQSFEIERHDSCAYDYLEIRDGPTEDSTLIGHFCGYEKPEAVKSSANRLWVKFVSDGSINKAGFAANFFKEVDECSWPDHGGCEQRCVNTLGSYTCACDPGYELAADKKTCEVACGGFITKLNGTITSPGWPKEYPTNKNCVWQVVAPVQYRISLQFEAFELEGNDVCKYDFVEVRSGLSPDAKLHGKFCGSETPEVITSQSNNMRVEFKSDNTVSKRGFRAHFFSDKDECAKDNGGCQQECVNTFGSYLCRCRNGYRLHENGHDCKEAGCAYKISSAEGTLMSPNWPDKYPSRKECTWNISSTAGHRVKITFSEFEIEQHQECAYDHLELYDGTDSLAPILGRFCGSKKPDPVVATGSSLFLRFYSDASVQRKGFQAVHSTECGGRLKAEVQTKELYSHAQFGDNNYPSQARCDWVIVAEDGYGVELIFRTFEVEEEADCGYDFMEAYDGYDSSAPRLGRFCGSGPLEEIYSAGDSLMIRFHTDDTINKKGFHARYTSTKFQDALHMRK.

A signal peptide spans 1-21; that stretch reads MPLATTLGTLVLLLLLPLPRG. The propeptide occupies 22–146; it reads AEVTGDHSNV…AKTFSARVRR (125 aa). The disordered stretch occupies residues 83–135; it reads KPSIDKPGHDTGGLEETSARWPNDTASNASIQAPRKDGKDATTFLPNPGTSNT. Over residues 126–135 the composition is skewed to polar residues; it reads FLPNPGTSNT. Residues 146–346 enclose the Peptidase M12A domain; the sequence is RATTSRTERI…AQARKLYKCP (201 aa). N-linked (GlcNAc...) asparagine glycosylation occurs at N168. 4 disulfide bridges follow: C189-C345, C209-C231, C211-C212, and C348-C374. H239 is a Zn(2+) binding site. E240 is an active-site residue. Positions 243 and 249 each coordinate Zn(2+). CUB domains lie at 348-460 and 461-573; these read CGET…YEAM and CGGD…FFKE. 2 N-linked (GlcNAc...) asparagine glycosylation sites follow: N358 and N389. Intrachain disulfides connect C401/C423, C461/C487, C514/C536, C577/C589, C585/C598, C600/C613, C617/C643, C670/C692, C733/C744, C740/C753, C755/C768, and C773/C799. The 42-residue stretch at 573 to 614 folds into the EGF-like 1; calcium-binding domain; it reads EVDECSWPDHGGCEQRCVNTLGSYTCACDPGYELAADKKTCE. The CUB 3 domain maps to 617-729; that stretch reads CGGFITKLNG…RGFRAHFFSD (113 aa). A glycan (N-linked (GlcNAc...) asparagine) is linked at N625. Residues 729–769 enclose the EGF-like 2; calcium-binding domain; the sequence is DKDECAKDNGGCQQECVNTFGSYLCRCRNGYRLHENGHDCK. 2 consecutive CUB domains span residues 773–885 and 886–1002; these read CAYK…HSTE and CGGR…YTST. N802 carries an N-linked (GlcNAc...) asparagine glycan. 3 disulfide bridges follow: C826/C848, C886/C916, and C943/C965. An omega-N-methylarginine mark is found at R960 and R963.

The cofactor is Zn(2+).

The protein localises to the secreted. Protease which specifically processes pro-lysyl oxidase. Required for the embryonic development. Predominant protease, which in the development, influences dorsal-ventral patterning and skeletogenesis. The sequence is that of Tolloid-like protein 2 (Tll2) from Mus musculus (Mouse).